We begin with the raw amino-acid sequence, 612 residues long: Coagulation factor XII (612 aa).

Positions 1–19 (MRALLLLGALLVSLESTVS) are cleaved as a signal peptide. The region spanning 42 to 90 (VTGEPCHFPFQYHRQLHHKCIHRGRPGPRPWCATTPNFEKDQRWAYCLE) is the Fibronectin type-II domain. 20 disulfides stabilise this stretch: C47–C73, C61–C88, C98–C110, C104–C119, C121–C130, C135–C163, C161–C170, C178–C189, C183–C198, C200–C209, C217–C306, C240–C288, C268–C301, C355–C482, C393–C409, C401–C471, C432–C435, C498–C566, C529–C545, and C556–C587. In terms of domain architecture, EGF-like 1 spans 94 to 131 (VKDHCSKHNPCQKGGTCVNMPDGPRCICADHFTGKHCQ). An O-linked (Fuc) threonine glycan is attached at T109. In terms of domain architecture, Fibronectin type-I spans 133–173 (EKCFEPQFFRFFHENEIWHRLEPAGVVKCQCKGPNAQCKPL). One can recognise an EGF-like 2 domain in the interval 174–210 (ASQVCRTNPCLNGGSCLQAEGHRLCRCAPSFAGRLCD). A Kringle domain is found at 217 to 306 (CYDDRDRGLS…SWNYCRLAPC (90 aa)). N-linked (GlcNAc...) asparagine glycans are attached at residues N251 and N282. In terms of domain architecture, Peptidase S1 spans 369–611 (VVGGLVALPG…YLAWIREHTA (243 aa)). The active-site Charge relay system is H408. N429 carries an N-linked (GlcNAc...) asparagine glycan. D457 serves as the catalytic Charge relay system. S560 functions as the Charge relay system in the catalytic mechanism.

It belongs to the peptidase S1 family. Interacts with HRG; the interaction, which is enhanced in the presence of zinc ions and inhibited by heparin-binding, inhibits factor XII autoactivation and contact-initiated coagulation. In terms of processing, O- and N-glycosylated.

It localises to the secreted. The catalysed reaction is Selective cleavage of Arg-|-Ile bonds in factor VII to form factor VIIa and factor XI to form factor XIa.. Its activity is regulated as follows. Activity is promoted in the presence of negatively charged surfaces. Functionally, factor XII is a serum glycoprotein that participates in the initiation of blood coagulation, fibrinolysis, and the generation of bradykinin and angiotensin. Prekallikrein is cleaved by factor XII to form kallikrein, which then cleaves factor XII first to alpha-factor XIIa and then to beta-factor XIIa. Alpha-factor XIIa activates factor XI to factor XIa. The sequence is that of Coagulation factor XII (F12) from Bos taurus (Bovine).